Consider the following 320-residue polypeptide: Lipoyl synthase (320 aa).

The interval 1–26 is disordered; the sequence is MVTVVDRVTSRRLRHPEKMHRPDTSI. Residues cysteine 59, cysteine 64, cysteine 70, cysteine 85, cysteine 89, cysteine 92, and serine 298 each coordinate [4Fe-4S] cluster. The Radical SAM core domain maps to 71-287; it reads WSQRHASFMI…AKIGKVKGFL (217 aa).

This sequence belongs to the radical SAM superfamily. Lipoyl synthase family. [4Fe-4S] cluster is required as a cofactor.

The protein localises to the cytoplasm. The enzyme catalyses [[Fe-S] cluster scaffold protein carrying a second [4Fe-4S](2+) cluster] + N(6)-octanoyl-L-lysyl-[protein] + 2 oxidized [2Fe-2S]-[ferredoxin] + 2 S-adenosyl-L-methionine + 4 H(+) = [[Fe-S] cluster scaffold protein] + N(6)-[(R)-dihydrolipoyl]-L-lysyl-[protein] + 4 Fe(3+) + 2 hydrogen sulfide + 2 5'-deoxyadenosine + 2 L-methionine + 2 reduced [2Fe-2S]-[ferredoxin]. It participates in protein modification; protein lipoylation via endogenous pathway; protein N(6)-(lipoyl)lysine from octanoyl-[acyl-carrier-protein]: step 2/2. In terms of biological role, catalyzes the radical-mediated insertion of two sulfur atoms into the C-6 and C-8 positions of the octanoyl moiety bound to the lipoyl domains of lipoate-dependent enzymes, thereby converting the octanoylated domains into lipoylated derivatives. The polypeptide is Lipoyl synthase (Bartonella quintana (strain Toulouse) (Rochalimaea quintana)).